The chain runs to 576 residues: Malonate--CoA ligase ACSF3, mitochondrial (576 aa).

Residues 1-83 (MLPHVVLTFR…RSLRLSQEIC (83 aa)) constitute a mitochondrion transit peptide. ATP contacts are provided by residues 202 to 210 (TSGTTGRPK), D457, R471, and K563.

Belongs to the ATP-dependent AMP-binding enzyme family.

The protein localises to the mitochondrion. The enzyme catalyses tetracosanoate + ATP + CoA = tetracosanoyl-CoA + AMP + diphosphate. It carries out the reaction malonate + ATP + CoA = malonyl-CoA + AMP + diphosphate. In terms of biological role, catalyzes the initial reaction in intramitochondrial fatty acid synthesis, by activating malonate and methylmalonate, but not acetate, into their respective CoA thioester. May have some preference toward very-long-chain substrates. This chain is Malonate--CoA ligase ACSF3, mitochondrial, found in Homo sapiens (Human).